Here is a 119-residue protein sequence, read N- to C-terminus: Protein phosphatase EYA1 (119 aa).

This sequence belongs to the HAD-like hydrolase superfamily. EYA family. Requires Mg(2+) as cofactor.

It is found in the cytoplasm. It localises to the nucleus. It catalyses the reaction O-phospho-L-tyrosyl-[protein] + H2O = L-tyrosyl-[protein] + phosphate. It carries out the reaction O-phospho-L-seryl-[protein] + H2O = L-seryl-[protein] + phosphate. The catalysed reaction is O-phospho-L-threonyl-[protein] + H2O = L-threonyl-[protein] + phosphate. Functions both as protein phosphatase and as transcriptional coactivator for SIX1, and probably also for other transcription factors of this family. Tyrosine phosphatase that dephosphorylates 'Tyr-142' of histone H2AX (H2AXY142ph) and promotes efficient DNA repair via the recruitment of DNA repair complexes containing MDC1. 'Tyr-142' phosphorylation of histone H2AX plays a central role in DNA repair and acts as a mark that distinguishes between apoptotic and repair responses to genotoxic stress. Its function as histone phosphatase may contribute to its function in transcription regulation during organogenesis. Also has phosphatase activity with proteins phosphorylated on Ser and Thr residues (in vitro). Required for normal embryonic development of the skeleton, kidneys and ears. The chain is Protein phosphatase EYA1 (EYA1) from Gallus gallus (Chicken).